The following is an 866-amino-acid chain: MMNHDTESHVKISRTIYRGVSPSTTRLESRVRELEDILDLERDARVRAERHAADLSYQVDALSERLDEAGGSTTQTQELLKRREMEINKLRKDLENANASLELAETSMRRRHQTALNELSLEVENLQKQKGKAEKDKSHLIMEVDNVLGQLDGALKAKQSAESKLEGLDSQLNRLKTLTDDLQRQLTELNNAKSRLTSENFELLHINQDYEAQILNYSKAKSSLESQVDDLKRSLDDESRNRFNLQAQLTSLQMDYDNLQAKYDEESEEASNLRNQVSKFNADIAALKSKFERELMSKTEEFEEMKRKLTMRITELEDVAERERLKAVSLEKLKTKLTLEIKDLQSEIESLSLENGELIRRAKSAESLASELQRRVDELTIEVNTLTSQNNQLESENMRLKSLVNDLTDKNNALERENRQMNDQVKELKSSLRDANRRLTDLEALRSQLEAERDNLASALHDAEEALRDMDQKYQASQAALNHLKSEMEQRLRERDEELESLRKSTTRTIEELTVTITEMEVKYKSELSRLKKRYESSIADLEIQLDATNKANANLMKENKNLAQRVKDLETFLDDERRLREAAENNLQITEHKRIQLANEVEELRSAMENLERLRKHAETELEETQSRVSELTIQVNTLSNDKRRLEGDIGVMQADMDDAINAKQAAEDRATRLNNEVLRLADELRQEQENYKHAEALRKQLEIEIREITVKLEEAEAFATREGRRMVQKLQARVRELEAEFDGESRRCKDALAQARKFERQYKELQTQAEDDRRMVLELQDLLDKTQMKMKAYKRQLEEMEEVSQITMNKYRKAQQQIEEAEHRADMAERTVTVRRVGPGGRAVSVARELSVTSNRGMRATSMM.

The interval 1–22 (MMNHDTESHVKISRTIYRGVSP) is nonhelical region. A coiled-coil region spans residues 23–839 (STTRLESRVR…AERTVTVRRV (817 aa)). Residues 840 to 866 (GPGGRAVSVARELSVTSNRGMRATSMM) form a nonhelical region region.

This sequence belongs to the paramyosin family. As to quaternary structure, homodimer.

It is found in the cytoplasm. It localises to the myofibril. Functionally, paramyosin is a major structural component of many thick filaments isolated from invertebrate muscles. This is Paramyosin from Schistosoma japonicum (Blood fluke).